Here is a 621-residue protein sequence, read N- to C-terminus: MDSHTLIQALIYLGAAALIVPVAVRLGLGSVLGYLIAGCIIGPWGFRLVTDAESILHFAEIGVVLMLFVIGLELDPRRLWKLRASVFGGGALQMIACGALLGGFCILLGMDWKVAELIGMTLALSSTAIAMQAMNERNLTVSQMGRSTFSVLLFQDIAAIPLVAMIPLLAVSGSSTTLGAFALSALKVAGALALVILLGRYVTRPLLRFVARSGLREVFSAVALFLVFGFGLLLEEAGLSMAMGAFLAGVLLASSEYRHALESDIEPFKGLLLGLFFIGVGMSVDFGTLVTHPLRILILLVGFLVIKMGMLWLIARPLNVPNRQRRWFAVLLGQGSEFAFVVFGAAQMANVLDPEWAKALTLAVALSMAVTPILLVLLTRLEQSGSEQDREADEIDEEQPRVIIAGFGRFGQISGRLLLSSGVKMVILDHDPDHIETLRKFGMKVFYGDATRVDLLESAGAAKAEVLINAIDDPLTNLQLAELAKEHFPNLKIISRARDVDHYIKLRQAGVETPERETFEGALKTGRMALEGLGLGAYEARERADLFRRFNLDMVEEMVEMADGDASSRAAAVKRTSAMLTEIINEDRNHLSLTQRHGWQGTEEGKHTGDPRDEPESKPTV.

12 helical membrane passes run 4–24, 26–46, 54–74, 90–110, 114–134, 151–171, 178–198, 218–238, 270–290, 294–314, 327–347, and 359–379; these read HTLI…PVAV, LGLG…PWGF, SILH…GLEL, GALQ…LLGM, VAEL…MQAM, VLLF…LLAV, LGAF…VILL, VFSA…EEAG, GLLL…GTLV, LRIL…LWLI, WFAV…GAAQ, and ALTL…VLLT. The 120-residue stretch at 399 to 518 folds into the RCK N-terminal domain; sequence QPRVIIAGFG…AGVETPERET (120 aa). The segment at 591-621 is disordered; the sequence is LSLTQRHGWQGTEEGKHTGDPRDEPESKPTV. A compositionally biased stretch (basic and acidic residues) spans 603–621; that stretch reads EEGKHTGDPRDEPESKPTV.

It belongs to the monovalent cation:proton antiporter 2 (CPA2) transporter (TC 2.A.37) family. KefC subfamily. As to quaternary structure, homodimer. Interacts with the regulatory subunit KefF.

The protein resides in the cell inner membrane. Functionally, pore-forming subunit of a potassium efflux system that confers protection against electrophiles. Catalyzes K(+)/H(+) antiport. The polypeptide is Glutathione-regulated potassium-efflux system protein KefC (Enterobacter sp. (strain 638)).